Consider the following 309-residue polypeptide: HPr kinase/phosphorylase (309 aa).

Residues H138 and K159 contribute to the active site. Position 153–160 (153–160 (GQSGVGKS)) interacts with ATP. S160 is a binding site for Mg(2+). D177 serves as the catalytic Proton acceptor; for phosphorylation activity. Proton donor; for dephosphorylation activity. Residues 201-210 (LEIRGLGIIN) are important for the catalytic mechanism of both phosphorylation and dephosphorylation. Mg(2+) is bound at residue E202. R243 is a catalytic residue. The tract at residues 264–269 (PVRPGR) is important for the catalytic mechanism of dephosphorylation.

The protein belongs to the HPrK/P family. As to quaternary structure, homohexamer. Mg(2+) serves as cofactor.

The catalysed reaction is [HPr protein]-L-serine + ATP = [HPr protein]-O-phospho-L-serine + ADP + H(+). It catalyses the reaction [HPr protein]-O-phospho-L-serine + phosphate + H(+) = [HPr protein]-L-serine + diphosphate. Catalyzes the ATP- as well as the pyrophosphate-dependent phosphorylation of a specific serine residue in HPr, a phosphocarrier protein of the phosphoenolpyruvate-dependent sugar phosphotransferase system (PTS). HprK/P also catalyzes the pyrophosphate-producing, inorganic phosphate-dependent dephosphorylation (phosphorolysis) of seryl-phosphorylated HPr (P-Ser-HPr). The two antagonistic activities of HprK/P are regulated by several intracellular metabolites, which change their concentration in response to the absence or presence of rapidly metabolisable carbon sources (glucose, fructose, etc.) in the growth medium. Also phosphorylates/dephosphorylates the HPr-like catabolite repression protein crh on a specific serine residue. Therefore, by controlling the phosphorylation state of HPr and crh, HPrK/P is a sensor enzyme that plays a major role in the regulation of carbon metabolism and sugar transport: it mediates carbon catabolite repression (CCR), and regulates PTS-catalyzed carbohydrate uptake and inducer exclusion. The protein is HPr kinase/phosphorylase of Bacillus cereus (strain AH820).